A 765-amino-acid chain; its full sequence is Glycine--tRNA ligase (765 aa).

The transit peptide at 1–87 (MSLQLLKALP…LRSAAAEFIM (87 aa)) directs the protein to the mitochondrion. Positions 41-73 (TTTKPTPSAPPPPPPTQPQQPAATTSWGTKKQN) are disordered. Over residues 47-58 (PSAPPPPPPTQP) the composition is skewed to pro residues. A WHEP-TRS domain is found at 95–151 (QLAPLRERVQEQGNLVRDLKAKGAPEIDVKKAVAELKARKKLLEDKELALTPSVVSF). A glycine-binding site is contributed by Glu331. ATP is bound by residues 363–365 (RNE) and 374–375 (RV). Glu382 serves as a coordination point for glycine. ATP is bound at residue 489 to 490 (EC). 609–611 (EPS) contacts glycine. Residue Arg616 coordinates ATP.

Belongs to the class-II aminoacyl-tRNA synthetase family. As to quaternary structure, homodimer.

Its subcellular location is the mitochondrion. The protein resides in the cytoplasm. It localises to the cell projection. It is found in the axon. It catalyses the reaction 2 ATP + H(+) = P(1),P(4)-bis(5'-adenosyl) tetraphosphate + diphosphate. The catalysed reaction is tRNA(Gly) + glycine + ATP = glycyl-tRNA(Gly) + AMP + diphosphate. Its function is as follows. Catalyzes the ATP-dependent ligation of glycine to the 3'-end of its cognate tRNA, via the formation of an aminoacyl-adenylate intermediate (Gly-AMP). Also produces diadenosine tetraphosphate (Ap4A), a universal pleiotropic signaling molecule needed for cell regulation pathways, by direct condensation of 2 ATPs. Thereby, may play a special role in Ap4A homeostasis. Required for terminal arborization of both dendrites and axons during development. In Drosophila melanogaster (Fruit fly), this protein is Glycine--tRNA ligase.